Here is a 409-residue protein sequence, read N- to C-terminus: Aquaporin-10 (409 aa).

2 disordered regions span residues 1–24 and 47–74; these read MADAPTYIRQSTTGTATTAPTTMP and ADVNDDNHDNYDETTGLRSGEKKTRPLV. Positions 12–22 are enriched in low complexity; it reads TTGTATTAPTT. 2 helical membrane-spanning segments follow: residues 110 to 130 and 138 to 158; these read FLGSFILIVFGNGVVAQVVLS and LSINIGYGLAVAFGVYIAGGI. An NPA 1 motif is present at residues 164 to 166; it reads NPA. A helical membrane pass occupies residues 184–204; it reads VYMFAQYAGCICASAIVHAIY. N-linked (GlcNAc...) asparagine glycosylation occurs at asparagine 215. 2 consecutive transmembrane segments (helical) span residues 241–261 and 270–290; these read TGLADQIFATSFLMIGILALT and GGVVPILVGCLVMAIGLAYGF. Residues 297–299 carry the NPA 2 motif; sequence NPA. A helical transmembrane segment spans residues 339–359; it reads IPVVGPHLGALLGAAIYFFFI.

Belongs to the MIP/aquaporin (TC 1.A.8) family.

It localises to the cell membrane. In terms of biological role, aquaglyceroporin that may modulate the water content and osmolytes during anhydrobiosis. The sequence is that of Aquaporin-10 from Milnesium tardigradum (Water bear).